Consider the following 882-residue polypeptide: DNA mismatch repair protein MutS (882 aa).

627–634 (GPNMAGKS) serves as a coordination point for ATP.

Belongs to the DNA mismatch repair MutS family.

This protein is involved in the repair of mismatches in DNA. It is possible that it carries out the mismatch recognition step. This protein has a weak ATPase activity. The sequence is that of DNA mismatch repair protein MutS from Anaeromyxobacter sp. (strain K).